An 876-amino-acid chain; its full sequence is Aspartate--tRNA(Asp/Asn) ligase (876 aa).

The tract at residues 1–278 (MAATDTPWRP…FGFKRAYEGF (278 aa)) is unknown. Residues 279 to 876 (MHVYRSHTCG…PKPKKEVKEG (598 aa)) are aspartyl-tRNA synthetase. Glu-453 is a binding site for L-aspartate. Residues 477–480 (QQFK) form an aspartate region. Arg-499 and His-729 together coordinate L-aspartate. 499–501 (RDE) lines the ATP pocket. Glu-763 lines the ATP pocket. Arg-770 is an L-aspartate binding site. Residue 815-818 (GVDR) coordinates ATP.

Belongs to the class-II aminoacyl-tRNA synthetase family. Type 1 subfamily. As to quaternary structure, homodimer.

Its subcellular location is the cytoplasm. It catalyses the reaction tRNA(Asx) + L-aspartate + ATP = L-aspartyl-tRNA(Asx) + AMP + diphosphate. Functionally, aspartyl-tRNA synthetase with relaxed tRNA specificity since it is able to aspartylate not only its cognate tRNA(Asp) but also tRNA(Asn). Reaction proceeds in two steps: L-aspartate is first activated by ATP to form Asp-AMP and then transferred to the acceptor end of tRNA(Asp/Asn). The polypeptide is Aspartate--tRNA(Asp/Asn) ligase (aspS) (Paramagnetospirillum magneticum (strain ATCC 700264 / AMB-1) (Magnetospirillum magneticum)).